The primary structure comprises 413 residues: Multifunctional CCA protein (413 aa).

Residues Gly-8 and Arg-11 each coordinate ATP. CTP contacts are provided by Gly-8 and Arg-11. Positions 21 and 23 each coordinate Mg(2+). 3 residues coordinate ATP: Arg-91, Arg-137, and Arg-140. CTP contacts are provided by Arg-91, Arg-137, and Arg-140. One can recognise an HD domain in the interval 228-329; sequence TGLHTLMTVT…VKLFDSIDAW (102 aa).

Belongs to the tRNA nucleotidyltransferase/poly(A) polymerase family. Bacterial CCA-adding enzyme type 1 subfamily. Monomer. Can also form homodimers and oligomers. Mg(2+) serves as cofactor. Ni(2+) is required as a cofactor.

It catalyses the reaction a tRNA precursor + 2 CTP + ATP = a tRNA with a 3' CCA end + 3 diphosphate. The enzyme catalyses a tRNA with a 3' CCA end + 2 CTP + ATP = a tRNA with a 3' CCACCA end + 3 diphosphate. Functionally, catalyzes the addition and repair of the essential 3'-terminal CCA sequence in tRNAs without using a nucleic acid template. Adds these three nucleotides in the order of C, C, and A to the tRNA nucleotide-73, using CTP and ATP as substrates and producing inorganic pyrophosphate. tRNA 3'-terminal CCA addition is required both for tRNA processing and repair. Also involved in tRNA surveillance by mediating tandem CCA addition to generate a CCACCA at the 3' terminus of unstable tRNAs. While stable tRNAs receive only 3'-terminal CCA, unstable tRNAs are marked with CCACCA and rapidly degraded. The polypeptide is Multifunctional CCA protein (Klebsiella pneumoniae (strain 342)).